Here is a 654-residue protein sequence, read N- to C-terminus: Potassium voltage-gated channel subfamily A member 4 (654 aa).

The Cytoplasmic portion of the chain corresponds to 1-305; that stretch reads MEVAMVSAES…LLFEYPESSS (305 aa). A compositionally biased stretch (low complexity) spans 39–52; the sequence is AAAAAVAAATAAVE. Residues 39–146 are disordered; it reads AAAAAVAAAT…EGRFYYSEDD (108 aa). The span at 81–99 shows a compositional bias: basic residues; sequence GSRRRRRQRPEKKKAHHRQ. A Phosphoserine modification is found at serine 122. Positions 122–137 are enriched in acidic residues; the sequence is SEEEEEEEDEEEEEEE. The helical transmembrane segment at 306–327 threads the bilayer; sequence PARGIAIVSVLVILISIVIFCL. At 328–371 the chain is on the extracellular side; that stretch reads ETLPEFRDDRDLIMALSAGGHSGLLNDTSAPHLENSGHTIFNDP. The N-linked (GlcNAc...) asparagine glycan is linked to asparagine 353. A helical membrane pass occupies residues 372–393; it reads FFIVETVCIVWFSFEFVVRCFA. The Cytoplasmic portion of the chain corresponds to 394–404; it reads CPSQALFFKNI. The chain crosses the membrane as a helical span at residues 405-425; the sequence is MNIIDIVSILPYFITLGTDLA. Over 426–440 the chain is Extracellular; that stretch reads QQQGGGNGQQQQAMS. Residues 441 to 461 form a helical; Voltage-sensor membrane-spanning segment; that stretch reads FAILRIIRLVRVFRIFKLSRH. Residues 462 to 476 are Cytoplasmic-facing; sequence SKGLQILGHTLRASM. Positions 463–476 are S4-S5 linker; the sequence is KGLQILGHTLRASM. Residues 477–498 traverse the membrane as a helical segment; sequence RELGLLIFFLFIGVILFSSAVY. The Extracellular segment spans residues 499-512; sequence FAEADEPTTHFQSI. Residues 513-524 constitute an intramembrane region (helical); the sequence is PDAFWWAVVTMT. A Selectivity filter motif is present at residues 525–530; the sequence is TVGYGD. Residues 525 to 532 lie within the membrane without spanning it; it reads TVGYGDMK. The Extracellular portion of the chain corresponds to 533–539; it reads PITVGGK. A helical transmembrane segment spans residues 540–568; sequence IVGSLCAIAGVLTIALPVPVIVSNFNYFY. The Cytoplasmic segment spans residues 569–654; it reads HRETENEEQT…SNAKAVETDV (86 aa). A Phosphoserine; by PKA modification is found at serine 600. Basic and acidic residues predominate over residues 630–641; sequence CQGKGDDSETDK. The interval 630–654 is disordered; that stretch reads CQGKGDDSETDKNNCSNAKAVETDV. Residues 652–654 carry the PDZ-binding motif; that stretch reads TDV.

Belongs to the potassium channel family. A (Shaker) (TC 1.A.1.2) subfamily. Kv1.4/KCNA4 sub-subfamily. In terms of assembly, homotetramer and heterotetramer of potassium channel proteins. Interacts with KCNAB1 and KCNAB2. Interacts with DLG1, DLG2 and DLG4 via their PDZ domains. Interacts with SIGMAR1. Detected in a complex with KCNA1. Interacts with KCNA2. Part of a complex containing KCNA1, KCNAB1 and LGI1. Interacts (via cytoplasmic N-terminal domain) with KCNRG. As to expression, detectable in brain, atrium, left and right ventricle, and kidney, but not in skeletal muscle, endothelial cells, aorta, and liver.

It localises to the cell membrane. The protein localises to the cell projection. The protein resides in the axon. The enzyme catalyses K(+)(in) = K(+)(out). In terms of biological role, voltage-gated potassium channel that mediates transmembrane potassium transport in excitable membranes. Forms tetrameric potassium-selective channels through which potassium ions pass in accordance with their electrochemical gradient. The channel alternates between opened and closed conformations in response to the voltage difference across the membrane. Can form functional homotetrameric channels and heterotetrameric channels that contain variable proportions of KCNA1, KCNA2, KCNA4, KCNA5, and possibly other family members as well; channel properties depend on the type of alpha subunits that are part of the channel. Channel properties are modulated by cytoplasmic beta subunits that regulate the subcellular location of the alpha subunits and promote rapid inactivation. In vivo, membranes probably contain a mixture of heteromeric potassium channel complexes, making it difficult to assign currents observed in intact tissues to any particular potassium channel family member. Homotetrameric KCNA4 forms a potassium channel that opens in response to membrane depolarization, followed by rapid spontaneous channel closure. Likewise, a heterotetrameric channel formed by KCNA1 and KCNA4 shows rapid inactivation. This chain is Potassium voltage-gated channel subfamily A member 4 (KCNA4), found in Mustela putorius furo (European domestic ferret).